The chain runs to 419 residues: Prolyl hydroxylase EGLN2 (419 aa).

Composition is skewed to low complexity over residues 1–18 (MDSP…PQLP) and 64–73 (TTATATTTTA). Disordered stretches follow at residues 1-89 (MDSP…GELW) and 108-181 (AAQG…REEV). Residues 89-134 (WPLQSEGAAALVTKECQRLAAQGARPEAPKRKWAKDGGDAPSPSKR) carry the Bipartite nuclear localization signal motif. Residues 115–126 (EAPKRKWAKDGG) are compositionally biased toward basic and acidic residues. S130 carries the post-translational modification Phosphoserine. The span at 154–174 (SGASNSSSSSSNTTSSSGEAS) shows a compositional bias: low complexity. Residues 237-247 (VSQRAIPPRSI) form a beta(2)beta(3) 'finger-like' loop region. Residues 290–388 (GRTKAMVACY…RYAITVWYFD (99 aa)) enclose the Fe2OG dioxygenase domain. Residues H309, D311, and H370 each contribute to the Fe cation site. R379 provides a ligand contact to 2-oxoglutarate.

As to quaternary structure, interacts with E3 ligase SIAH2. Interacts with LIMD1, WTIP and AJUBA. Fe(2+) is required as a cofactor. L-ascorbate serves as cofactor. Ubiquitinated by SIAH1 and/or SIAH2 in response to the unfolded protein response (UPR), leading to its degradation. As to expression, highly expressed in testis, expression was also detected in the heart brain, liver kidney and lung. Expression was lowest in spleen and skeletal muscle. Constitutively expressed during differentiation of C2C12 skeletal myocytes.

It is found in the nucleus. It carries out the reaction L-prolyl-[protein] + 2-oxoglutarate + O2 = trans-4-hydroxy-L-prolyl-[protein] + succinate + CO2. It catalyses the reaction L-prolyl-[hypoxia-inducible factor alpha subunit] + 2-oxoglutarate + O2 = trans-4-hydroxy-L-prolyl-[hypoxia-inducible factor alpha subunit] + succinate + CO2. In terms of biological role, prolyl hydroxylase that mediates hydroxylation of proline residues in target proteins, such as ATF4, IKBKB, CEP192 and HIF1A. Target proteins are preferentially recognized via a LXXLAP motif. Cellular oxygen sensor that catalyzes, under normoxic conditions, the post-translational formation of 4-hydroxyproline in hypoxia-inducible factor (HIF) alpha proteins. Hydroxylates a specific proline found in each of the oxygen-dependent degradation (ODD) domains (N-terminal, NODD, and C-terminal, CODD) of HIF1A. Also hydroxylates HIF2A. Has a preference for the CODD site for both HIF1A and HIF2A. Hydroxylated HIFs are then targeted for proteasomal degradation via the von Hippel-Lindau ubiquitination complex. Under hypoxic conditions, the hydroxylation reaction is attenuated allowing HIFs to escape degradation resulting in their translocation to the nucleus, heterodimerization with HIF1B, and increased expression of hypoxy-inducible genes. EGLN2 is involved in regulating hypoxia tolerance and apoptosis in cardiac and skeletal muscle. Also regulates susceptibility to normoxic oxidative neuronal death. Links oxygen sensing to cell cycle and primary cilia formation by hydroxylating the critical centrosome component CEP192 which promotes its ubiquitination and subsequent proteasomal degradation. Hydroxylates IKBKB, mediating NF-kappa-B activation in hypoxic conditions. Also mediates hydroxylation of ATF4, leading to decreased protein stability of ATF4. This Mus musculus (Mouse) protein is Prolyl hydroxylase EGLN2.